The sequence spans 227 residues: Fibrillarin-like rRNA/tRNA 2'-O-methyltransferase (227 aa).

S-adenosyl-L-methionine-binding positions include 86-87 (TT), 105-106 (EF), 130-131 (DA), and 150-153 (DVAQ).

It belongs to the methyltransferase superfamily. Fibrillarin family. Interacts with nop5. Component of box C/D small ribonucleoprotein (sRNP) particles that contain rpl7ae, FlpA and nop5, plus a guide RNA.

Functionally, involved in pre-rRNA and tRNA processing. Utilizes the methyl donor S-adenosyl-L-methionine to catalyze the site-specific 2'-hydroxyl methylation of ribose moieties in rRNA and tRNA. Site specificity is provided by a guide RNA that base pairs with the substrate. Methylation occurs at a characteristic distance from the sequence involved in base pairing with the guide RNA. The chain is Fibrillarin-like rRNA/tRNA 2'-O-methyltransferase from Pyrococcus horikoshii (strain ATCC 700860 / DSM 12428 / JCM 9974 / NBRC 100139 / OT-3).